The chain runs to 417 residues: Pygopus homolog 1 (417 aa).

Positions 1-11 are enriched in basic and acidic residues; that stretch reads MSAEQDKEPIA. Disordered stretches follow at residues 1–71, 175–265, and 284–318; these read MSAE…AANP, HFRQ…MEDP, and ENSR…CTPD. Residues 18–27 are compositionally biased toward gly residues; that stretch reads GDSGLDGLGG. Positions 35 to 41 match the Nuclear localization signal motif; it reads PDKKKRK. 3 stretches are compositionally biased toward polar residues: residues 180–221, 240–256, and 284–305; these read SAEN…TNHS, DFTQ…SSTH, and ENSR…QNKP. The PHD-type zinc-finger motif lies at 338-396; sequence VYPCGICTNEVNDDQDAILCEASCQKWFHRICTGMTETAYGLLTAEASAVWGCDTCMAD. The segment at 339–386 is interaction with H3K4me2; the sequence is YPCGICTNEVNDDQDAILCEASCQKWFHRICTGMTETAYGLLTAEASA. The interval 371-389 is interaction with BCL9; it reads GMTETAYGLLTAEASAVWG.

In terms of assembly, interacts with BCL9 via The PHD-type zinc finger motiv, and thereby becomes part of the nuclear beta-catenin/TCF complex. Found in a complex with BCL9L, CDC73, CTNNB1 and PYGO1. Interacts with histone H3 mono-, di- or tri-methylated at 'Lys4' (H3K4me1, H3K4me2, H3K4me3); the interaction is enhanced by the interaction with BCL9.

Its subcellular location is the nucleus. Functionally, involved in signal transduction through the Wnt pathway. The chain is Pygopus homolog 1 (Pygo1) from Mus musculus (Mouse).